A 312-amino-acid chain; its full sequence is Olfactory receptor 7D2 (312 aa).

Residues 1–25 (MEAGNQTGFLEFILLGLSEDPELQP) lie on the Extracellular side of the membrane. N-linked (GlcNAc...) asparagine glycosylation occurs at N5. A helical membrane pass occupies residues 26–46 (FIFGLFLSMYLVTVLGNLLII). Over 47–54 (LAISSDSH) the chain is Cytoplasmic. A helical membrane pass occupies residues 55 to 75 (LHTPMYFFLSNLSWVDICFST). Residues 76-99 (CIVPKMLVNIQTENKAISYMDCLT) lie on the Extracellular side of the membrane. C97 and C189 are disulfide-bonded. Residues 100–120 (QVYFSMFFPILDTLLLTVMAY) traverse the membrane as a helical segment. Residues 121 to 139 (DRFVAVCHPLHYMIIMNPH) lie on the Cytoplasmic side of the membrane. Residues 140-160 (LCGLLVFVTWLIGVMTSLLHI) traverse the membrane as a helical segment. Residues 161–197 (SLMMHLIFCKDFEIPHFFCELTYILQLACSDTFLNST) are Extracellular-facing. Residues 198–217 (LIYFMTGVLGVFPLLGIIFS) form a helical membrane-spanning segment. Topologically, residues 218–237 (YSRIASSIRKMSSSGGKQKA) are cytoplasmic. The chain crosses the membrane as a helical span at residues 238-258 (LSTCGSHLSVVSLFYGTGIGV). Residues 259 to 271 (HFTSAVTHSSQKI) are Extracellular-facing. Residues 272–292 (SVASVMYTVVTPMLNPFIYSL) form a helical membrane-spanning segment. At 293–312 (RNKDVKGALGSLLSRAASCL) the chain is on the cytoplasmic side.

It belongs to the G-protein coupled receptor 1 family.

The protein resides in the cell membrane. Its function is as follows. Odorant receptor. The sequence is that of Olfactory receptor 7D2 (OR7D2) from Homo sapiens (Human).